Reading from the N-terminus, the 272-residue chain is Acidic leucine-rich nuclear phosphoprotein 32-related protein 2 (272 aa).

LRR repeat units follow at residues 57–78 (SLEE…PRLP), 79–100 (ALRR…AAVA), and 106–127 (TLRH…APLA). The 46-residue stretch at 139–184 (CPVTKAKGYRDKVFALIPSLKFLDGMDAEGNDCLDSDDEEDEEEDE) folds into the LRRCT domain. Residues 163 to 272 (GMDAEGNDCL…DSEDDANGDN (110 aa)) form a disordered region. Residues 164–241 (MDAEGNDCLD…DEAGADEEDE (78 aa)) are compositionally biased toward acidic residues. The span at 248–257 (SKGSSGSAQP) shows a compositional bias: polar residues.

This sequence belongs to the ANP32 family.

In Oryza sativa subsp. japonica (Rice), this protein is Acidic leucine-rich nuclear phosphoprotein 32-related protein 2.